A 370-amino-acid polypeptide reads, in one-letter code: UDP-N-acetylglucosamine--N-acetylmuramyl-(pentapeptide) pyrophosphoryl-undecaprenol N-acetylglucosamine transferase (370 aa).

Residues Thr-10–Gly-12, Asn-126, Ser-200, Ile-255, and Gln-300 each bind UDP-N-acetyl-alpha-D-glucosamine.

It belongs to the glycosyltransferase 28 family. MurG subfamily.

The protein localises to the cell membrane. The catalysed reaction is Mur2Ac(oyl-L-Ala-gamma-D-Glu-L-Lys-D-Ala-D-Ala)-di-trans,octa-cis-undecaprenyl diphosphate + UDP-N-acetyl-alpha-D-glucosamine = beta-D-GlcNAc-(1-&gt;4)-Mur2Ac(oyl-L-Ala-gamma-D-Glu-L-Lys-D-Ala-D-Ala)-di-trans,octa-cis-undecaprenyl diphosphate + UDP + H(+). It participates in cell wall biogenesis; peptidoglycan biosynthesis. In terms of biological role, cell wall formation. Catalyzes the transfer of a GlcNAc subunit on undecaprenyl-pyrophosphoryl-MurNAc-pentapeptide (lipid intermediate I) to form undecaprenyl-pyrophosphoryl-MurNAc-(pentapeptide)GlcNAc (lipid intermediate II). The chain is UDP-N-acetylglucosamine--N-acetylmuramyl-(pentapeptide) pyrophosphoryl-undecaprenol N-acetylglucosamine transferase from Lactobacillus delbrueckii subsp. bulgaricus (strain ATCC 11842 / DSM 20081 / BCRC 10696 / JCM 1002 / NBRC 13953 / NCIMB 11778 / NCTC 12712 / WDCM 00102 / Lb 14).